The following is a 97-amino-acid chain: Large ribosomal subunit protein uL23 (97 aa).

Belongs to the universal ribosomal protein uL23 family. In terms of assembly, part of the 50S ribosomal subunit. Contacts protein L29, and trigger factor when it is bound to the ribosome.

Functionally, one of the early assembly proteins it binds 23S rRNA. One of the proteins that surrounds the polypeptide exit tunnel on the outside of the ribosome. Forms the main docking site for trigger factor binding to the ribosome. The polypeptide is Large ribosomal subunit protein uL23 (Brucella suis (strain ATCC 23445 / NCTC 10510)).